The sequence spans 378 residues: Alanine racemase (378 aa).

Residue Lys-40 is the Proton acceptor; specific for D-alanine of the active site. Lys-40 is modified (N6-(pyridoxal phosphate)lysine). Residue Arg-140 coordinates substrate. Catalysis depends on Tyr-270, which acts as the Proton acceptor; specific for L-alanine. Met-317 serves as a coordination point for substrate.

Belongs to the alanine racemase family. It depends on pyridoxal 5'-phosphate as a cofactor.

It catalyses the reaction L-alanine = D-alanine. It functions in the pathway amino-acid biosynthesis; D-alanine biosynthesis; D-alanine from L-alanine: step 1/1. In terms of biological role, catalyzes the interconversion of L-alanine and D-alanine. May also act on other amino acids. In Lacticaseibacillus paracasei (strain ATCC 334 / BCRC 17002 / CCUG 31169 / CIP 107868 / KCTC 3260 / NRRL B-441) (Lactobacillus paracasei), this protein is Alanine racemase (alr).